The chain runs to 241 residues: B-cell receptor-associated protein 29 (241 aa).

Residues 1–6 lie on the Lumenal side of the membrane; that stretch reads MTLQWA. A helical membrane pass occupies residues 7 to 27; it reads AVATFLYAEIGLILIFCLPFI. Topologically, residues 28-43 are cytoplasmic; sequence PPQRWQKIFSFNVWGK. Residues 44-64 traverse the membrane as a helical segment; the sequence is IATFWNKAFLTIIILLIVLFL. Residues 65–103 lie on the Lumenal side of the membrane; the sequence is DAVREVRKYSSVHTIEKSSTSRPDAYEHTQMKLFRSQRN. The chain crosses the membrane as a helical span at residues 104–124; sequence LYISGFSLFFWLVLRRLVTLI. Residues 125 to 241 lie on the Cytoplasmic side of the membrane; the sequence is TQLAKELSNK…RLERGNKKRL (117 aa). Residues 166-233 adopt a coiled-coil conformation; that stretch reads GKDEECVLEA…KEHSELQDRL (68 aa). The interval 198–223 is disordered; sequence LSKAQNDVMEMKMQSERLSKEYDQLL. The segment covering 206-223 has biased composition (basic and acidic residues); that stretch reads MEMKMQSERLSKEYDQLL. A Di-lysine motif motif is present at residues 238–241; the sequence is KKRL.

It belongs to the BCAP29/BCAP31 family. In terms of assembly, homodimer. Heterodimer with BCAP31. Binds CASP8 (isoform 9) as a complex containing BCAP31, BCAP29, BCL2 and/or BCL2L1. Interacts with VAMP3, VAMP1 and membrane IgD immunoglobulins. May interact with ACTG1 and non-muscle myosin II.

Its subcellular location is the endoplasmic reticulum membrane. Functionally, may play a role in anterograde transport of membrane proteins from the endoplasmic reticulum to the Golgi. May be involved in CASP8-mediated apoptosis. This chain is B-cell receptor-associated protein 29 (BCAP29), found in Homo sapiens (Human).